Here is an 872-residue protein sequence, read N- to C-terminus: Probably inactive leucine-rich repeat receptor-like protein kinase At5g06940 (872 aa).

An N-terminal signal peptide occupies residues methionine 1–serine 26. Residues phenylalanine 27–lysine 540 lie on the Extracellular side of the membrane. Residues asparagine 55, asparagine 63, and asparagine 86 are each glycosylated (N-linked (GlcNAc...) asparagine). LRR repeat units lie at residues serine 79 to leucine 98, proline 99 to cysteine 122, valine 123 to phenylalanine 146, serine 147 to leucine 169, phenylalanine 171 to lysine 193, serine 195 to glycine 217, leucine 219 to leucine 243, threonine 244 to serine 267, lysine 269 to glycine 292, arginine 294 to cysteine 316, leucine 317 to leucine 340, proline 341 to serine 365, leucine 367 to lysine 389, leucine 391 to serine 412, proline 413 to cysteine 435, lysine 436 to leucine 459, histidine 460 to asparagine 482, and lysine 484 to glycine 506. Asparagine 129 carries an N-linked (GlcNAc...) asparagine glycan. N-linked (GlcNAc...) asparagine glycosylation occurs at asparagine 255. Residue asparagine 297 is glycosylated (N-linked (GlcNAc...) asparagine). Residue asparagine 374 is glycosylated (N-linked (GlcNAc...) asparagine). N-linked (GlcNAc...) asparagine glycosylation occurs at asparagine 419. A glycan (N-linked (GlcNAc...) asparagine) is linked at asparagine 489. A helical transmembrane segment spans residues alanine 541 to tyrosine 561. The Cytoplasmic segment spans residues arginine 562–alanine 872. The residue at position 585 (threonine 585) is a Phosphothreonine. A Protein kinase domain is found at leucine 589–isoleucine 863. Residues glutamate 595–valine 603 and lysine 617 contribute to the ATP site. Phosphotyrosine is present on residues tyrosine 662, tyrosine 699, tyrosine 754, and tyrosine 761.

It belongs to the protein kinase superfamily. Ser/Thr protein kinase family.

The protein localises to the membrane. This is Probably inactive leucine-rich repeat receptor-like protein kinase At5g06940 from Arabidopsis thaliana (Mouse-ear cress).